A 78-amino-acid polypeptide reads, in one-letter code: Alpha-amylase inhibitor Haim-1 (78 aa).

2 disulfides stabilise this stretch: cysteine 11-cysteine 27 and cysteine 45-cysteine 72.

In terms of biological role, inhibits mammalian alpha-amylases specifically but has no action on plant and microbial alpha-amylases. The chain is Alpha-amylase inhibitor Haim-1 from Streptomyces griseosporeus.